Reading from the N-terminus, the 472-residue chain is Selenium-binding protein 2 (472 aa).

Serine 467 carries the post-translational modification Phosphoserine.

Belongs to the selenium-binding protein family. In terms of processing, the N-terminus is blocked. In terms of tissue distribution, mainly expressed in liver.

The protein resides in the nucleus. The protein localises to the cytoplasm. It localises to the cytosol. It is found in the membrane. In terms of biological role, selenium- and acetaminophen-binding protein which may be involved in the sensing of reactive xenobiotics in the cytoplasm. May be involved in intra-Golgi protein transport. This chain is Selenium-binding protein 2 (Selenbp2), found in Mus musculus (Mouse).